Here is a 529-residue protein sequence, read N- to C-terminus: Bifunctional purine biosynthesis protein PurH (529 aa).

The region spanning 1–148 (MQQRRPVRRA…KNHKDVAIVV (148 aa)) is the MGS-like domain. K287 carries the N6-acetyllysine modification.

It belongs to the PurH family.

It catalyses the reaction (6R)-10-formyltetrahydrofolate + 5-amino-1-(5-phospho-beta-D-ribosyl)imidazole-4-carboxamide = 5-formamido-1-(5-phospho-D-ribosyl)imidazole-4-carboxamide + (6S)-5,6,7,8-tetrahydrofolate. The catalysed reaction is IMP + H2O = 5-formamido-1-(5-phospho-D-ribosyl)imidazole-4-carboxamide. It functions in the pathway purine metabolism; IMP biosynthesis via de novo pathway; 5-formamido-1-(5-phospho-D-ribosyl)imidazole-4-carboxamide from 5-amino-1-(5-phospho-D-ribosyl)imidazole-4-carboxamide (10-formyl THF route): step 1/1. It participates in purine metabolism; IMP biosynthesis via de novo pathway; IMP from 5-formamido-1-(5-phospho-D-ribosyl)imidazole-4-carboxamide: step 1/1. The polypeptide is Bifunctional purine biosynthesis protein PurH (Escherichia fergusonii (strain ATCC 35469 / DSM 13698 / CCUG 18766 / IAM 14443 / JCM 21226 / LMG 7866 / NBRC 102419 / NCTC 12128 / CDC 0568-73)).